The sequence spans 639 residues: Chaperone protein DnaK (639 aa).

Phosphothreonine; by autocatalysis is present on Thr198. Over residues 603 to 618 (AKAQTQGGAQEGAAKQ) the composition is skewed to low complexity. The tract at residues 603-639 (AKAQTQGGAQEGAAKQSNATADDVVDAEFEEVKDDKK) is disordered. Residues 625–639 (DVVDAEFEEVKDDKK) are compositionally biased toward acidic residues.

The protein belongs to the heat shock protein 70 family.

In terms of biological role, acts as a chaperone. This chain is Chaperone protein DnaK, found in Shewanella sp. (strain ANA-3).